The sequence spans 427 residues: 3-phosphoshikimate 1-carboxyvinyltransferase (427 aa).

The 3-phosphoshikimate site is built by Lys20, Ser21, and Arg25. Lys20 serves as a coordination point for phosphoenolpyruvate. Phosphoenolpyruvate is bound by residues Gly92 and Arg120. 3-phosphoshikimate is bound by residues Ser166, Gln168, Asp312, and Lys339. Residue Gln168 participates in phosphoenolpyruvate binding. Asp312 (proton acceptor) is an active-site residue. The phosphoenolpyruvate site is built by Arg343 and Arg385.

It belongs to the EPSP synthase family. In terms of assembly, monomer.

The protein localises to the cytoplasm. It carries out the reaction 3-phosphoshikimate + phosphoenolpyruvate = 5-O-(1-carboxyvinyl)-3-phosphoshikimate + phosphate. The protein operates within metabolic intermediate biosynthesis; chorismate biosynthesis; chorismate from D-erythrose 4-phosphate and phosphoenolpyruvate: step 6/7. Its function is as follows. Catalyzes the transfer of the enolpyruvyl moiety of phosphoenolpyruvate (PEP) to the 5-hydroxyl of shikimate-3-phosphate (S3P) to produce enolpyruvyl shikimate-3-phosphate and inorganic phosphate. The sequence is that of 3-phosphoshikimate 1-carboxyvinyltransferase from Streptococcus uberis (strain ATCC BAA-854 / 0140J).